A 209-amino-acid polypeptide reads, in one-letter code: Mitochondrial import inner membrane translocase subunit Tim23 (209 aa).

The next 3 membrane-spanning stretches (helical) occupy residues 73-93 (FELAFFTIGGCCISGAAFGAL), 125-145 (ALWANTLGSLALLYSAFGVIV), and 180-200 (GGLAGLALASTFALYNNWEHI).

The protein belongs to the Tim17/Tim22/Tim23 family. As to quaternary structure, component of the TIM23 complex at least composed of timm23, timm17 and timm50. The complex interacts with the timm44 component of the PAM complex.

It is found in the mitochondrion inner membrane. Essential component of the TIM23 complex, a complex that mediates the translocation of transit peptide-containing proteins across the mitochondrial inner membrane. The polypeptide is Mitochondrial import inner membrane translocase subunit Tim23 (timm23) (Xenopus laevis (African clawed frog)).